The following is a 176-amino-acid chain: Nucleoside triphosphate/diphosphate phosphatase (176 aa).

The active-site Proton donor is the arginine 23. Residues asparagine 87, aspartate 103, aspartate 105, aspartate 107, aspartate 120, and glutamate 123 each contribute to the Mg(2+) site.

It belongs to the Ntdp family. Mg(2+) is required as a cofactor.

It catalyses the reaction a ribonucleoside 5'-triphosphate + H2O = a ribonucleoside 5'-diphosphate + phosphate + H(+). The catalysed reaction is a ribonucleoside 5'-diphosphate + H2O = a ribonucleoside 5'-phosphate + phosphate + H(+). Functionally, has nucleoside phosphatase activity towards nucleoside triphosphates and nucleoside diphosphates. The sequence is that of Nucleoside triphosphate/diphosphate phosphatase from Bacillus anthracis (strain A0248).